A 190-amino-acid chain; its full sequence is GTP cyclohydrolase 1 (190 aa).

The Zn(2+) site is built by C75, H78, and C146.

Belongs to the GTP cyclohydrolase I family. In terms of assembly, toroid-shaped homodecamer, composed of two pentamers of five dimers.

It catalyses the reaction GTP + H2O = 7,8-dihydroneopterin 3'-triphosphate + formate + H(+). It participates in cofactor biosynthesis; 7,8-dihydroneopterin triphosphate biosynthesis; 7,8-dihydroneopterin triphosphate from GTP: step 1/1. This Campylobacter jejuni (strain RM1221) protein is GTP cyclohydrolase 1.